The primary structure comprises 353 residues: Ion-translocating oxidoreductase complex subunit D (353 aa).

Helical transmembrane passes span 20–40, 44–64, 77–108, and 123–143; these read IMLL…YYFG, IIQV…ILHL, SALL…AIII, and PAMV…TSWL. Thr-187 carries the FMN phosphoryl threonine modification. A run of 4 helical transmembrane segments spans residues 214–234, 242–262, 267–287, and 301–318; these read VIAG…GVFL, WHIP…GWLL, LVTP…FFIA, and LLYG…RSYG.

This sequence belongs to the NqrB/RnfD family. The complex is composed of six subunits: RnfA, RnfB, RnfC, RnfD, RnfE and RnfG. Requires FMN as cofactor.

It localises to the cell inner membrane. Part of a membrane-bound complex that couples electron transfer with translocation of ions across the membrane. The chain is Ion-translocating oxidoreductase complex subunit D from Erwinia tasmaniensis (strain DSM 17950 / CFBP 7177 / CIP 109463 / NCPPB 4357 / Et1/99).